The following is a 656-amino-acid chain: Leucine aminopeptidase 2 (656 aa).

Substrate-binding positions include 173–175 (QLE) and 302–307 (PYGGME). Histidine 331 contacts Zn(2+). Glutamate 332 functions as the Proton acceptor in the catalytic mechanism. Zn(2+) contacts are provided by histidine 335 and glutamate 354. Residue tyrosine 420 is the Proton donor of the active site.

This sequence belongs to the peptidase M1 family. Requires Zn(2+) as cofactor.

It localises to the cytoplasm. The protein localises to the nucleus. The enzyme catalyses an epoxide + H2O = an ethanediol. In terms of biological role, aminopeptidase that preferentially cleaves di- and tripeptides. Also has low epoxide hydrolase activity (in vitro). Can hydrolyze the epoxide leukotriene LTA(4) but it forms preferentially 5,6-dihydroxy-7,9,11,14-eicosatetraenoic acid rather than the cytokine leukotriene B(4) as the product compared to the homologous mammalian enzyme (in vitro). In Vanderwaltozyma polyspora (strain ATCC 22028 / DSM 70294 / BCRC 21397 / CBS 2163 / NBRC 10782 / NRRL Y-8283 / UCD 57-17) (Kluyveromyces polysporus), this protein is Leucine aminopeptidase 2.